We begin with the raw amino-acid sequence, 488 residues long: MTNKNETGWNLESSYTVLPKSFFTEIPPTPVHSPELIKLNNSLAISLGFNPEELKKDAEIAILAGNTIPEGAHPLAQAYAGHQFGHFNVLGDGRALLIGEQITPSGERFDIQLKGSGPTPYSRRGDGRAALGPMLREYIISEAMYALDIPTTRSLAVVSTGEPIYRETKLPGAILTRVASSHIRVGTFQYAAARGSIEDLKALADYTIKRHYPEVESTENPYVALLQEVIKRQASLIAKWQLVGFIHGVMNTDNITISGETIDYGPCAFMDSYNQGTVFSSIDTQGRYAYGNQPYMAAWDLARLAESLIPILHEDEEEALKIAQDEISKFSVQYENNWFLGIKKKLGLFSNEEHDQSLIEKLLKAMEKYKADYTNTFRALTDNILENAPLFKSPEFKEWYELWQSRLERQKESKDDAYKLMKNNNPVIIPRNHRVEEALEAAVKDGDYSVMEKLLQALANPYEYSQEQADYCTPPVPSNRPYRTFCGT.

Residues Gly91, Gly93, Arg94, Lys114, Asp126, Gly127, Arg177, and Arg184 each coordinate ATP. Residue Asp253 is the Proton acceptor of the active site. The Mg(2+) site is built by Asn254 and Asp263. Asp263 provides a ligand contact to ATP.

It belongs to the SELO family. It depends on Mg(2+) as a cofactor. The cofactor is Mn(2+).

It carries out the reaction L-seryl-[protein] + ATP = 3-O-(5'-adenylyl)-L-seryl-[protein] + diphosphate. The enzyme catalyses L-threonyl-[protein] + ATP = 3-O-(5'-adenylyl)-L-threonyl-[protein] + diphosphate. It catalyses the reaction L-tyrosyl-[protein] + ATP = O-(5'-adenylyl)-L-tyrosyl-[protein] + diphosphate. The catalysed reaction is L-histidyl-[protein] + UTP = N(tele)-(5'-uridylyl)-L-histidyl-[protein] + diphosphate. It carries out the reaction L-seryl-[protein] + UTP = O-(5'-uridylyl)-L-seryl-[protein] + diphosphate. The enzyme catalyses L-tyrosyl-[protein] + UTP = O-(5'-uridylyl)-L-tyrosyl-[protein] + diphosphate. Its function is as follows. Nucleotidyltransferase involved in the post-translational modification of proteins. It can catalyze the addition of adenosine monophosphate (AMP) or uridine monophosphate (UMP) to a protein, resulting in modifications known as AMPylation and UMPylation. The polypeptide is Protein nucleotidyltransferase YdiU (Bacillus mycoides (strain KBAB4) (Bacillus weihenstephanensis)).